The primary structure comprises 283 residues: Protoheme IX farnesyltransferase (283 aa).

Transmembrane regions (helical) follow at residues 13–33 (ISSVVTLSAFAGFLIGSPTGL), 35–55 (GGTLLWTMLGTALCAGGVGTL), 90–110 (ILLVCLAVGLLCPLVNVLTAV), 156–176 (LGAGGWATFGILATWQMPHFL), 208–228 (MIGFAALLVPVSVLPVLTEAA), 230–250 (WIYGVGVVPLGLWFLWTTIVF), and 262–282 (VLKASVLYIPGLVALLLVDWF).

This sequence belongs to the UbiA prenyltransferase family. Protoheme IX farnesyltransferase subfamily.

It localises to the cell inner membrane. It catalyses the reaction heme b + (2E,6E)-farnesyl diphosphate + H2O = Fe(II)-heme o + diphosphate. It functions in the pathway porphyrin-containing compound metabolism; heme O biosynthesis; heme O from protoheme: step 1/1. Converts heme B (protoheme IX) to heme O by substitution of the vinyl group on carbon 2 of heme B porphyrin ring with a hydroxyethyl farnesyl side group. The sequence is that of Protoheme IX farnesyltransferase from Salinibacter ruber (strain DSM 13855 / M31).